Here is a 47-residue protein sequence, read N- to C-terminus: Defensin-2 (47 aa).

4 disulfide bridges follow: Cys-3-Cys-47, Cys-14-Cys-35, Cys-20-Cys-41, and Cys-24-Cys-43.

Belongs to the DEFL family. As to expression, epidermis and vascular bundles of pods, stems, roots, leaves and wet or dry seeds.

Possesses antifungal activity sensitive to inorganic cations. In Pisum sativum (Garden pea), this protein is Defensin-2.